A 139-amino-acid chain; its full sequence is Probable transcription termination protein NusA (139 aa).

The KH domain maps to 31 to 97 (DDRVVYVVTA…YNVTVSENDT (67 aa)).

Belongs to the NusA family.

It is found in the cytoplasm. Functionally, participates in transcription termination. This chain is Probable transcription termination protein NusA, found in Halobacterium salinarum (strain ATCC 29341 / DSM 671 / R1).